The following is a 98-amino-acid chain: MPDPDSTLAARLLRIRGRVQGVSYRASAQREAQRLGLSGWVRNRHDGSVEALVCGPADTVERFIAWAHVGPPAASVSAIEVGDAAPTDGAGFDCLPTC.

Positions 10-96 constitute an Acylphosphatase-like domain; that stretch reads ARLLRIRGRV…TDGAGFDCLP (87 aa). Active-site residues include R25 and N43.

The protein belongs to the acylphosphatase family.

The enzyme catalyses an acyl phosphate + H2O = a carboxylate + phosphate + H(+). This is Acylphosphatase (acyP) from Azoarcus sp. (strain BH72).